A 631-amino-acid chain; its full sequence is Polyadenylate-binding protein 3 (631 aa).

4 RRM domains span residues 11–89, 99–175, 191–268, and 294–370; these read ASLY…WSQR, GNIF…QFKS, PNVY…RAQK, and VNLY…LAQR. Tyr-140 carries the post-translational modification Phosphotyrosine. Ser-315 carries the post-translational modification Phosphoserine. At Lys-361 the chain carries N6,N6-dimethyllysine; alternate. Residue Lys-361 forms a Glycyl lysine isopeptide (Lys-Gly) (interchain with G-Cter in SUMO2); alternate linkage. Tyr-364 bears the Phosphotyrosine mark. An omega-N-methylarginine mark is found at Arg-426, Arg-430, and Arg-449. Arg-501 carries the dimethylated arginine modification. An Omega-N-methylarginine modification is found at Arg-513. In terms of domain architecture, PABC spans 537-614; that stretch reads QETLTASRLA…AVAVLQAHQA (78 aa).

The protein belongs to the polyadenylate-binding protein type-1 family. As to expression, testis specific.

The protein resides in the cytoplasm. Functionally, binds the poly(A) tail of mRNA. May be involved in cytoplasmic regulatory processes of mRNA metabolism. Binds poly(A) with a slightly lower affinity as compared to PABPC1. In Homo sapiens (Human), this protein is Polyadenylate-binding protein 3 (PABPC3).